The sequence spans 287 residues: PIH1 domain-containing protein 1 (287 aa).

This sequence belongs to the PIH1 family.

It localises to the nucleus. In terms of biological role, involved in the assembly of C/D box small nucleolar ribonucleoprotein (snoRNP) particles. Recruits the SWI/SNF complex to the core promoter of rRNA genes and enhances pre-rRNA transcription. Mediates interaction of TELO2 with the R2TP complex which is necessary for the stability of MTOR and SMG1. Positively regulates the assembly and activity of the mTORC1 complex. This chain is PIH1 domain-containing protein 1 (pih1d1), found in Danio rerio (Zebrafish).